A 278-amino-acid chain; its full sequence is Large ribosomal subunit protein uL2 (278 aa).

The segment at 201-278 (HGNINDGKAG…IMRSRHQRKK (78 aa)) is disordered. Over residues 210–221 (GRSRWRGKKPHV) the composition is skewed to basic residues.

It belongs to the universal ribosomal protein uL2 family. As to quaternary structure, part of the 50S ribosomal subunit. Forms a bridge to the 30S subunit in the 70S ribosome.

In terms of biological role, one of the primary rRNA binding proteins. Required for association of the 30S and 50S subunits to form the 70S ribosome, for tRNA binding and peptide bond formation. It has been suggested to have peptidyltransferase activity; this is somewhat controversial. Makes several contacts with the 16S rRNA in the 70S ribosome. This is Large ribosomal subunit protein uL2 from Rhizobium rhizogenes (strain K84 / ATCC BAA-868) (Agrobacterium radiobacter).